Consider the following 64-residue polypeptide: Leader peptide SpeFL (64 aa).

Positions 32–38 match the Ornithine recognition loop motif; that stretch reads HIRRTRH. Residue Arg-35 coordinates L-ornithine.

This sequence belongs to the speF operon leader peptide family. As to quaternary structure, binds ornithine in stalled 70S ribosomes, blocking the upper two-thirds of the exit tunnel. Contacts 23S rRNA and ribosomal proteins L4 and L22.

Functionally, a small protein (arrest peptide) encoded upstream of inducible ornithine carboxylase gene (speF) that controls expression of downstream genes (usually speF and potE) by transcriptional and translational attenuation. This chain is Leader peptide SpeFL, found in Haemophilus influenzae (strain ATCC 51907 / DSM 11121 / KW20 / Rd).